We begin with the raw amino-acid sequence, 354 residues long: Protein FAM181A (354 aa).

Composition is skewed to basic and acidic residues over residues 1–14 and 129–142; these read MPLE…ERND and YLKR…RRLL. 3 disordered regions span residues 1 to 35, 117 to 160, and 172 to 193; these read MPLE…KQVS, LPRG…CKEK, and AKEQ…VPMR.

Belongs to the FAM181 family.

The polypeptide is Protein FAM181A (FAM181A) (Homo sapiens (Human)).